The chain runs to 339 residues: Serine racemase (339 aa).

Residues S43 and K63 each coordinate ATP. K68 acts as the Proton acceptor in catalysis. K68 bears the N6-(pyridoxal phosphate)lysine mark. T90 contributes to the Ca(2+) binding site. The active-site Proton acceptor is S93. N95 serves as a coordination point for pyridoxal 5'-phosphate. The residue at position 122 (C122) is an S-nitrosocysteine. Residue Y130 coordinates ATP. Position 187 (D187) interacts with Mg(2+). The pyridoxal 5'-phosphate site is built by G195, G196, and G197. Residues E219, A223, and D225 each coordinate Ca(2+). 3 residues coordinate Mg(2+): E219, A223, and D225. Residues E219, A223, and D225 each coordinate Mn(2+). An ATP-binding site is contributed by K287. Position 323 (S323) interacts with pyridoxal 5'-phosphate. N326 is a binding site for ATP.

It belongs to the serine/threonine dehydratase family. Mg(2+) serves as cofactor. Requires Mn(2+) as cofactor. It depends on Ca(2+) as a cofactor. Pyridoxal 5'-phosphate is required as a cofactor.

It carries out the reaction L-serine = D-serine. The enzyme catalyses L-serine = pyruvate + NH4(+). The catalysed reaction is D-serine = pyruvate + NH4(+). Functionally, catalyzes the synthesis of D-serine from L-serine. Has dehydratase activity towards both L-serine and D-serine. This Oryza sativa subsp. indica (Rice) protein is Serine racemase.